A 198-amino-acid chain; its full sequence is MRAFVLRARSAPTDSQLFLASVGQEPHTEILAHTLMNTIFVAQSHRNDVVVYLVLESTHDFSRTICFDTRNICHIGGFHEQALLTKIAKALDISRGMTKEQTRVVDEGITVSTISFEKLVQDLAVDYQLFMMDKKGTSIREQEFVGNPCFLLTDHIPMPKKSFNTLKRLGAQKISLGPKMLFASQCVVLIHNELDINQ.

Residues M132 and C186 each contribute to the S-adenosyl-L-methionine site.

This sequence belongs to the methyltransferase superfamily. TrmY family.

The protein localises to the cytoplasm. The sequence is that of Putative pseudouridine methyltransferase from Shewanella baltica (strain OS185).